A 121-amino-acid chain; its full sequence is Large ribosomal subunit protein bL17 (121 aa).

Belongs to the bacterial ribosomal protein bL17 family. Part of the 50S ribosomal subunit. Contacts protein L32.

The sequence is that of Large ribosomal subunit protein bL17 from Sulfurihydrogenibium sp. (strain YO3AOP1).